The primary structure comprises 635 residues: Beta-mannosyltransferase 2 (635 aa).

At 1–6 (MRTRLN) the chain is on the cytoplasmic side. Residues 7-27 (FLLLCIASVLSVIWIGVLLTW) traverse the membrane as a helical segment. Residues 28-635 (NDNNLGGISL…EKKEAEKKGK (608 aa)) are Extracellular-facing. An N-linked (GlcNAc...) asparagine glycan is attached at N484. Residues 512–635 (TRGEAERRRR…EKKEAEKKGK (124 aa)) adopt a coiled-coil conformation. A disordered region spans residues 517–635 (ERRRRVAEER…EKKEAEKKGK (119 aa)).

The protein belongs to the BMT family.

It localises to the membrane. Functionally, beta-mannosyltransferase involved in cell wall biosynthesis. Initiates the beta-mannosylation of core N-linked glycans. This is Beta-mannosyltransferase 2 (BMT2) from Komagataella phaffii (strain ATCC 76273 / CBS 7435 / CECT 11047 / NRRL Y-11430 / Wegner 21-1) (Yeast).